Consider the following 241-residue polypeptide: Small ribosomal subunit protein uS2 (241 aa).

This sequence belongs to the universal ribosomal protein uS2 family.

In Yersinia enterocolitica serotype O:8 / biotype 1B (strain NCTC 13174 / 8081), this protein is Small ribosomal subunit protein uS2.